Here is a 149-residue protein sequence, read N- to C-terminus: MVDDAGAAESQRGKQTPAHSLEQLRRLPLPPPQIRIRPWWFPVQELRDPLVFYLEAWLADELFGPDRAIIPEMEWTSQALLTVDIVDSGNLVEITVFGRPRVQNRVKSMLLCLAWFHREHRARAEKMKHLEKNLKAHASDPHSPQDPVA.

Positions methionine 1–glutamate 22 are disordered. The region spanning proline 49–leucine 110 is the KH; atypical domain.

The protein belongs to the KHDC1 family. As to quaternary structure, component of the subcortical maternal complex (SCMC), at least composed of NLRP5, KHDC3L, OOEP, and TLE6 isoform 1. Within the complex, interacts with NLRP5, KHDC3L and TLE6 isoform 1. As part of the SCMC interacts with the SCMC-associated protein NLRP4F. The SCMC may facilitate translocation of its components between the nuclear and cytoplasmic compartments. Forms a scaffold complex with KHDC3L/FILIA, and interacts with BLM and TRIM25 at DNA replication forks.

The protein localises to the cytoplasm. It is found in the nucleus. Component of the subcortical maternal complex (SCMC), a multiprotein complex that plays a key role in early embryonic development. The SCMC complex is a structural constituent of cytoplasmic lattices, which consist in fibrous structures found in the cytoplasm of oocytes and preimplantation embryos. They are required to store maternal proteins critical for embryonic development, such as proteins that control epigenetic reprogramming of the preimplantation embryo, and prevent their degradation or activation. As part of the OOEP-KHDC3 scaffold, recruits BLM and TRIM25 to DNA replication forks, thereby promoting the ubiquitination of BLM by TRIM25, enhancing BLM retainment at replication forks and therefore promoting stalled replication fork restart. Positively regulates the homologous recombination-mediated DNA double-strand break (DSB) repair pathway by regulating ATM activation and RAD51 recruitment to DSBs in oocytes. Thereby contributes to oocyte survival and the resumption and completion of meiosis. In Homo sapiens (Human), this protein is Oocyte-expressed protein homolog.